The primary structure comprises 562 residues: Potassium-transporting ATPase potassium-binding subunit (562 aa).

Helical transmembrane passes span 5 to 25 (AFLL…PLGS), 63 to 83 (AAAI…LLMA), 132 to 152 (GLTV…FALI), 175 to 195 (LYVL…QGVL), 250 to 270 (LSNI…CFAF), 279 to 299 (QGHA…AVVM), 379 to 399 (GLYG…LMIG), 416 to 436 (MTAL…ALAL), 483 to 503 (VLLA…VLAI), and 526 to 546 (LFIG…FIPA).

It belongs to the KdpA family. The system is composed of three essential subunits: KdpA, KdpB and KdpC.

It localises to the cell inner membrane. Functionally, part of the high-affinity ATP-driven potassium transport (or Kdp) system, which catalyzes the hydrolysis of ATP coupled with the electrogenic transport of potassium into the cytoplasm. This subunit binds the periplasmic potassium ions and delivers the ions to the membrane domain of KdpB through an intramembrane tunnel. In Pectobacterium atrosepticum (strain SCRI 1043 / ATCC BAA-672) (Erwinia carotovora subsp. atroseptica), this protein is Potassium-transporting ATPase potassium-binding subunit.